Here is a 321-residue protein sequence, read N- to C-terminus: Glutathione synthetase (321 aa).

Residues 125 to 311 enclose the ATP-grasp domain; it reads EKLFTGWFPH…IAGQFIAFLE (187 aa). 151 to 208 provides a ligand contact to ATP; it reads FIREQKEVVIKPLGAMAGESIFYLTVNDPNIPVVIETMTANGHQLVMAQRFIPEVKSG. 2 residues coordinate Mg(2+): Glu-282 and Asn-284.

It belongs to the prokaryotic GSH synthase family. It depends on Mg(2+) as a cofactor. Mn(2+) is required as a cofactor.

The catalysed reaction is gamma-L-glutamyl-L-cysteine + glycine + ATP = glutathione + ADP + phosphate + H(+). Its pathway is sulfur metabolism; glutathione biosynthesis; glutathione from L-cysteine and L-glutamate: step 2/2. This chain is Glutathione synthetase, found in Coxiella burnetii (strain RSA 493 / Nine Mile phase I).